The sequence spans 473 residues: Purple acid phosphatase 1 (473 aa).

An N-terminal signal peptide occupies residues 1-38; the sequence is MRLVVVGLWCLILGLILNPTKFCDAGVTSSYVRKSLSA. Residue Asn-118 is glycosylated (N-linked (GlcNAc...) asparagine). Asp-172 lines the Fe cation pocket. N-linked (GlcNAc...) asparagine glycosylation occurs at Asn-180. Residues Asp-201 and Tyr-204 each contribute to the Fe cation site. Asp-201 is a Mn(2+) binding site. Residue Asn-238 coordinates Mn(2+). Asn-238 provides a ligand contact to substrate. N-linked (GlcNAc...) asparagine glycosylation is present at Asn-311. His-323 provides a ligand contact to Mn(2+). His-333 functions as the Proton donor in the catalytic mechanism. His-360 contacts Mn(2+). 360–362 lines the substrate pocket; the sequence is HVH. His-362 provides a ligand contact to Fe cation. Residue Asn-433 is glycosylated (N-linked (GlcNAc...) asparagine).

The protein belongs to the metallophosphoesterase superfamily. Purple acid phosphatase family. In terms of assembly, homodimer; disulfide-linked. Fe cation is required as a cofactor. The cofactor is Mn(2+). It depends on Zn(2+) as a cofactor. Cu(2+) serves as cofactor. Requires Mg(2+) as cofactor.

The protein resides in the secreted. It catalyses the reaction a phosphate monoester + H2O = an alcohol + phosphate. This is Purple acid phosphatase 1 (PAP1) from Ipomoea batatas (Sweet potato).